Reading from the N-terminus, the 576-residue chain is Zn(2)-C6 fungal-type transcription factor mpsE (576 aa).

Residues 15-46 (CDRCRSHKLKCPQQPSTATGACQRCTRAKAQC) constitute a DNA-binding region (zn(2)-C6 fungal-type). Positions 47 to 61 (TFSPRSRAIKNTQDG) are enriched in polar residues. Disordered stretches follow at residues 47-123 (TFSP…GTFD), 334-369 (VAHA…SSTA), and 404-424 (HPAP…LHRR). Residues 95–109 (PPQQQQSDQQKPSGS) show a composition bias toward low complexity.

Its subcellular location is the nucleus. Functionally, transcription factor; part of the gene cluster that mediates the biosynthesis of macrophasetins, 3-decalinoyltetramic acids (DTAs) which feature a tetramate (pyrrolidine-2,4-dione) unit connected to a decalin fragment and that have potent bioactivities. This chain is Zn(2)-C6 fungal-type transcription factor mpsE, found in Macrophomina phaseolina (strain MS6) (Charcoal rot fungus).